Here is a 1563-residue protein sequence, read N- to C-terminus: Ribulose bisphosphate carboxylase (1563 aa).

Substrate is bound by residues His-32 and Ser-79. Positions 197-217 (LAAAFVGASTTRKASSVARRA) are cleaved as a propeptide — linker. Asn-328 is a binding site for substrate. Lys-383 functions as the Proton acceptor in the catalytic mechanism. Position 385 (Lys-385) interacts with substrate. The Mg(2+) site is built by Lys-408, Asp-410, and Glu-411. Lys-408 is subject to N6-carboxylysine. The Proton acceptor role is filled by His-504. Substrate-binding residues include Arg-505, His-538, and Ser-585. A propeptide spans 703–723 (LAAAFVGASTTRKASSVARRA) (linker). Substrate is bound at residue Asn-834. The active-site Proton acceptor is Lys-889. Lys-891 provides a ligand contact to substrate. Lys-914, Asp-916, and Glu-917 together coordinate Mg(2+). Residue Lys-914 is modified to N6-carboxylysine. Catalysis depends on His-1010, which acts as the Proton acceptor. Substrate contacts are provided by Arg-1011, His-1044, and Ser-1091. Positions 1209 to 1229 (LAAAFVGASTTRKASSVARRA) are cleaved as a propeptide — linker. Asn-1340 serves as a coordination point for substrate. The Proton acceptor role is filled by Lys-1395. Lys-1397 serves as a coordination point for substrate. 3 residues coordinate Mg(2+): Lys-1420, Asp-1422, and Glu-1423. An N6-carboxylysine modification is found at Lys-1420. The active-site Proton acceptor is the His-1516. Positions 1517 and 1550 each coordinate substrate.

Belongs to the RuBisCO large chain family. Type II subfamily. As to quaternary structure, homodimer. It depends on Mg(2+) as a cofactor. In terms of processing, in Western blots an approximately 220 kDa polyprotein and 2 smaller proteins of about 55 and 52 kDa are detected, suggesting the polyprotein may be cleaved at one end of the linker and then at the other end to give mature RuBisCO.

The protein localises to the plastid. The protein resides in the chloroplast. It catalyses the reaction 2 (2R)-3-phosphoglycerate + 2 H(+) = D-ribulose 1,5-bisphosphate + CO2 + H2O. The catalysed reaction is D-ribulose 1,5-bisphosphate + O2 = 2-phosphoglycolate + (2R)-3-phosphoglycerate + 2 H(+). Functionally, ruBisCO catalyzes two reactions: the carboxylation of D-ribulose 1,5-bisphosphate, the primary event in carbon dioxide fixation, as well as the oxidative fragmentation of the pentose substrate. Both reactions occur simultaneously and in competition at the same active site. This Prorocentrum minimum (Dinoflagellate) protein is Ribulose bisphosphate carboxylase (rbcL).